Consider the following 138-residue polypeptide: Thyrotropin subunit beta (138 aa).

Residues 1 to 20 (MTAIFLMSVLFGLACGQAMS) form the signal peptide. Intrachain disulfides connect cysteine 22–cysteine 72, cysteine 36–cysteine 87, cysteine 39–cysteine 125, cysteine 47–cysteine 103, cysteine 51–cysteine 105, and cysteine 108–cysteine 115. Asparagine 43 carries N-linked (GlcNAc...) asparagine glycosylation. Residues 133-138 (VVGLSI) constitute a propeptide that is removed on maturation.

The protein belongs to the glycoprotein hormones subunit beta family. Heterodimer of a common alpha chain and a unique beta chain which confers biological specificity to thyrotropin, lutropin, follitropin and gonadotropin.

It is found in the secreted. Its function is as follows. Indispensable for the control of thyroid structure and metabolism. This Lama glama (Llama) protein is Thyrotropin subunit beta (TSHB).